The primary structure comprises 364 residues: Spermidine/putrescine import ATP-binding protein PotA (364 aa).

Residues 5–235 form the ABC transporter domain; the sequence is LSFKGVTKGF…PVNRFVADFI (231 aa). 37-44 contributes to the ATP binding site; the sequence is GPSGCGKT.

It belongs to the ABC transporter superfamily. Spermidine/putrescine importer (TC 3.A.1.11.1) family. The complex is composed of two ATP-binding proteins (PotA), two transmembrane proteins (PotB and PotC) and a solute-binding protein (PotD).

The protein resides in the cell membrane. It carries out the reaction ATP + H2O + polyamine-[polyamine-binding protein]Side 1 = ADP + phosphate + polyamineSide 2 + [polyamine-binding protein]Side 1.. Functionally, part of the ABC transporter complex PotABCD involved in spermidine/putrescine import. Responsible for energy coupling to the transport system. The protein is Spermidine/putrescine import ATP-binding protein PotA of Staphylococcus haemolyticus (strain JCSC1435).